We begin with the raw amino-acid sequence, 942 residues long: MSWLNNPSQNFVDPFIRIKCILGDDIRIIKFNSNISYGGLMNQLEQDFQCPISIHQYEDYEGDKVTVKSKDDIMEALTMYFELKALNPTKIISTKFFLKQLPPQSQPLSSSLSPTQSLILNNNNNNNNNNNNNNNNNNNNNNNNIIQHTDFPSLIINEHEELISNHNIKWQKGQILGRGGYGSVYLGLNKDTGELFAVKQLEIVDINSDPKLKNMILSFSKEIEVMRSLRHDNIVRYLGTSLDQSFLSVFLEYIPGGSISSLLGKFGAFSENVIKVYTKQILQGLSFLHANSIIHRDIKGANILIDTKGIVKLSDFGCSKSFSGIVSQFKSMQGTPYWMAPEVIKQTGHGRSSDIWSLGCVIVEMATAQPPWSNITELAAVMYHIASSNSIPNIPSHMSQEAFDFLNLCFKRDPKERPDANQLLKHPFIMNLDDNIQLPTISPTTTLSTNTTNTTATTTTTNNATNSNINQQQQQQQQQPPTRTQRVSISAGSSNNKRYTPPISTSTSSSSSSILNNFSINIILPINLIILIFREIKPNFVNTLSRVCKHWKQIIDDDELWNKYCSDRLINKSKFEESITWKSNYIKIYKQQKVWFHNKLNHSTLKGHDKGVFCVKLIDDQGMVLSGGEDKKLKVWDISGNHHHNHHSGIVGSISKKSGLNIINNNNSNNSNSSSNSSSSNSRYLFSLKGHSGCIKSVDYQRQSGSDVSRVFTASADFTCKIFSLKTKKTLFTYTNHQEAVTCINYLGDVENKCITSSLDKTIQLWDAETGSCLSTLRGHTGGIYCVKTDQVATHGNGYNHLVVSASVDKTSNVWDTRSSSKVRSFTQHTEDVLCCYVFDQKVVTGSCDGTIKLWDIGTGKTISTFIPSETRQKNYVWTVQFDQSKIISSGKTGIIRIWDIYNERDSRSIGGHHETIFSLQFNNQKLITGSLDKLVKIWSID.

The PB1 domain occupies 15–96 (FIRIKCILGD…NPTKIISTKF (82 aa)). Residues 107–144 (PLSSSLSPTQSLILNNNNNNNNNNNNNNNNNNNNNNNN) are disordered. The Protein kinase domain occupies 170 to 429 (WQKGQILGRG…ANQLLKHPFI (260 aa)). Residues 176–184 (LGRGGYGSV) and Lys-199 each bind ATP. Residue Asp-297 is the Proton acceptor of the active site. The span at 441–486 (ISPTTTLSTNTTNTTATTTTTNNATNSNINQQQQQQQQQPPTRTQR) shows a compositional bias: low complexity. Residues 441–512 (ISPTTTLSTN…ISTSTSSSSS (72 aa)) form a disordered region. The segment covering 487-498 (VSISAGSSNNKR) has biased composition (polar residues). Residues 500–512 (TPPISTSTSSSSS) show a composition bias toward low complexity. Residues 513–533 (SILNNFSINIILPINLIILIF) form a helical membrane-spanning segment. An F-box domain is found at 518–564 (FSINIILPINLIILIFREIKPNFVNTLSRVCKHWKQIIDDDELWNKY). WD repeat units lie at residues 607–646 (GHDK…HHNH), 690–733 (GHSG…TLFT), 736–778 (NHQE…STLR), 780–825 (HTGG…KVRS), 828–865 (QHTE…TIST), 872–909 (RQKN…DSRS), and 912–942 (GHHE…WSID).

The protein belongs to the protein kinase superfamily. STE Ser/Thr protein kinase family. MAP kinase kinase kinase subfamily. Interacts with ubcB and ubpB. Mg(2+) is required as a cofactor. Post-translationally, ubcB and ubpB differentially control ubiquitination/deubiquitination and degradation in a cell-type-specific and temporally regulated manner.

The protein resides in the membrane. It carries out the reaction L-seryl-[protein] + ATP = O-phospho-L-seryl-[protein] + ADP + H(+). It catalyses the reaction L-threonyl-[protein] + ATP = O-phospho-L-threonyl-[protein] + ADP + H(+). Its function is as follows. Regulates cell-type differentiation and spatial patterning, required for the proper induction and maintenance of prespore cell differentiation. This chain is Mitogen-activated protein kinase kinase kinase A, found in Dictyostelium discoideum (Social amoeba).